Consider the following 121-residue polypeptide: SQPHVNPFACYVAPDQGPCRAILRYYFDDDTQTCQRFTYGGCEGNANNXXXXEQCKASCKPETEYEAKKCLARPESGPCLAYMPMWGYDSKLGQCVEFIYGGCDGNDNKYTTEEECLKSCK.

2 consecutive BPTI/Kunitz inhibitor domains span residues Cys-10 to Cys-59 and Pro-61 to Thr-111. 6 disulfide bridges follow: Cys-10/Cys-59, Cys-19/Cys-42, Cys-34/Cys-55, Cys-70/Cys-120, Cys-79/Cys-103, and Cys-95/Cys-116.

N-glycosylated. As to expression, highly expressed in gut. Low-level expression in salivary gland and ovary. Not detected in fat body and hemocytes.

The protein resides in the secreted. In terms of biological role, serine protease inhibitor. Inhibits bovine trypsin, bovine chymotrypsin, human plasmin, human plasma kallikrein and human neutrophil elastase, but not bovine thrombin, human factor Xa or porcine pancreatic kallikrein. Reduces cell viability and inhibits capillary tube formation in vitro probably by reducing bradykinin release. May play a role in blocking blood coagulation during the larvae fixation on cattle. In Rhipicephalus microplus (Cattle tick), this protein is Kunitz-type serine protease inhibitor A.